We begin with the raw amino-acid sequence, 259 residues long: ATP synthase subunit a (259 aa).

5 consecutive transmembrane segments (helical) span residues 29 to 49 (TVNI…IWLF), 89 to 109 (LIAP…AMDL), 132 to 154 (SADV…FYSI), 209 to 229 (IFIL…NVPW), and 230 to 250 (AIFH…LTIV).

The protein belongs to the ATPase A chain family. As to quaternary structure, F-type ATPases have 2 components, CF(1) - the catalytic core - and CF(0) - the membrane proton channel. CF(1) has five subunits: alpha(3), beta(3), gamma(1), delta(1), epsilon(1). CF(0) has three main subunits: a(1), b(2) and c(9-12). The alpha and beta chains form an alternating ring which encloses part of the gamma chain. CF(1) is attached to CF(0) by a central stalk formed by the gamma and epsilon chains, while a peripheral stalk is formed by the delta and b chains.

Its subcellular location is the cell inner membrane. Key component of the proton channel; it plays a direct role in the translocation of protons across the membrane. The protein is ATP synthase subunit a of Tolumonas auensis (strain DSM 9187 / NBRC 110442 / TA 4).